Consider the following 264-residue polypeptide: MRQYLQLLEDILENGVEKDDRTGVGTLSVFGRQLRFNLQEGFPLLTTKKLHIRSIIYELLWFLKGDTNVRYLQENGVTIWDEWADENGDLGPIYGAQWRSWKGADGKTVDQISWVIEEIKRNPNSRRLLVSAWNVAELDKMKLPPCHYAFQFYVADGKLSCMWQQRSVDTFLGLPFNIASYALLTHMIAQQCDLDVGELIFSGGDVHLYKNHLEQAKLQLTREPRPLPKLVIKRKPASIFEYEFEDFEIVDYDPHPHIKAPVAV.

Arginine 21 is a binding site for dUMP. Histidine 51 serves as a coordination point for (6R)-5,10-methylene-5,6,7,8-tetrahydrofolate. 126 to 127 (RR) contacts dUMP. The Nucleophile role is filled by cysteine 146. DUMP contacts are provided by residues 166 to 169 (RSVD), asparagine 177, and 207 to 209 (HLY). Residue aspartate 169 participates in (6R)-5,10-methylene-5,6,7,8-tetrahydrofolate binding. Residue alanine 263 coordinates (6R)-5,10-methylene-5,6,7,8-tetrahydrofolate.

This sequence belongs to the thymidylate synthase family. Bacterial-type ThyA subfamily. In terms of assembly, homodimer.

It is found in the cytoplasm. It catalyses the reaction dUMP + (6R)-5,10-methylene-5,6,7,8-tetrahydrofolate = 7,8-dihydrofolate + dTMP. It participates in pyrimidine metabolism; dTTP biosynthesis. Functionally, catalyzes the reductive methylation of 2'-deoxyuridine-5'-monophosphate (dUMP) to 2'-deoxythymidine-5'-monophosphate (dTMP) while utilizing 5,10-methylenetetrahydrofolate (mTHF) as the methyl donor and reductant in the reaction, yielding dihydrofolate (DHF) as a by-product. This enzymatic reaction provides an intracellular de novo source of dTMP, an essential precursor for DNA biosynthesis. The polypeptide is Thymidylate synthase (Geobacillus sp. (strain WCH70)).